A 567-amino-acid chain; its full sequence is Glutamine--tRNA ligase (567 aa).

Positions 47–57 (PEPNGYLHIGH) match the 'HIGH' region motif. ATP contacts are provided by residues 48 to 50 (EPN) and 54 to 60 (HIGHAKS). Positions 80 and 225 each coordinate L-glutamine. Residues threonine 244 and 274-275 (RL) each bind ATP. The short motif at 281–285 (ITSKR) is the 'KMSKS' region element.

Belongs to the class-I aminoacyl-tRNA synthetase family. Monomer.

The protein localises to the cytoplasm. It catalyses the reaction tRNA(Gln) + L-glutamine + ATP = L-glutaminyl-tRNA(Gln) + AMP + diphosphate. This chain is Glutamine--tRNA ligase, found in Pseudomonas putida (strain ATCC 47054 / DSM 6125 / CFBP 8728 / NCIMB 11950 / KT2440).